The following is a 313-amino-acid chain: Malate dehydrogenase (313 aa).

NAD(+)-binding positions include 11–16 (GAGNIG) and D35. Substrate contacts are provided by R84 and R90. NAD(+) is bound by residues N97 and 120 to 122 (VTN). Substrate is bound by residues N122 and R153. The active-site Proton acceptor is the H177.

Belongs to the LDH/MDH superfamily. MDH type 3 family.

The catalysed reaction is (S)-malate + NAD(+) = oxaloacetate + NADH + H(+). Its function is as follows. Catalyzes the reversible oxidation of malate to oxaloacetate. The polypeptide is Malate dehydrogenase (Ehrlichia canis (strain Jake)).